The primary structure comprises 89 residues: Small ribosomal subunit protein uS15 (89 aa).

Belongs to the universal ribosomal protein uS15 family. In terms of assembly, part of the 30S ribosomal subunit. Forms a bridge to the 50S subunit in the 70S ribosome, contacting the 23S rRNA.

Functionally, one of the primary rRNA binding proteins, it binds directly to 16S rRNA where it helps nucleate assembly of the platform of the 30S subunit by binding and bridging several RNA helices of the 16S rRNA. In terms of biological role, forms an intersubunit bridge (bridge B4) with the 23S rRNA of the 50S subunit in the ribosome. The chain is Small ribosomal subunit protein uS15 from Acinetobacter baumannii (strain AB307-0294).